The chain runs to 804 residues: Exocyst complex component 6 (804 aa).

Belongs to the SEC15 family. In terms of assembly, the exocyst complex is composed of EXOC1, EXOC2, EXOC3, EXOC4, EXOC5, EXOC6, EXOC7 and EXOC8. Interacts with CNTRL. Interacts with RAB11A in a GTP-dependent manner.

The protein resides in the cytoplasm. It localises to the perinuclear region. Its subcellular location is the cell projection. It is found in the growth cone. The protein localises to the midbody. The protein resides in the midbody ring. Component of the exocyst complex involved in the docking of exocytic vesicles with fusion sites on the plasma membrane. Together with RAB11A, RAB3IP, RAB8A, PARD3, PRKCI, ANXA2, CDC42 and DNMBP promotes transcytosis of PODXL to the apical membrane initiation sites (AMIS), apical surface formation and lumenogenesis. The sequence is that of Exocyst complex component 6 (EXOC6) from Homo sapiens (Human).